Here is a 1153-residue protein sequence, read N- to C-terminus: Cytosolic carboxypeptidase 1 (1153 aa).

Residues 357–400 form a disordered region; the sequence is NQPPGVDDVVDESDENEATEVDTENDTENEEDDTGHKTQNDDIE. Residues 364-389 show a composition bias toward acidic residues; it reads DVVDESDENEATEVDTENDTENEEDD. In terms of domain architecture, Peptidase M14 spans 774-1063; the sequence is YPYTYSMLKM…QFCLALLRLR (290 aa). H845, E848, and H942 together coordinate Zn(2+). E1027 acts as the Proton donor/acceptor in catalysis. Acidic residues predominate over residues 1108 to 1128; that stretch reads AFLEEVDYSAESNDENDPELE. Residues 1108–1153 form a disordered region; it reads AFLEEVDYSAESNDENDPELEPDLRDNHALPDPSSDSELSHQDSLT. Polar residues predominate over residues 1141–1153; the sequence is SSDSELSHQDSLT.

The protein belongs to the peptidase M14 family. Zn(2+) is required as a cofactor.

It localises to the cytoplasm. The protein resides in the cytosol. Its subcellular location is the nucleus. The protein localises to the mitochondrion. The catalysed reaction is (L-glutamyl)(n+1)-gamma-L-glutamyl-L-glutamyl-[protein] + H2O = (L-glutamyl)(n)-gamma-L-glutamyl-L-glutamyl-[protein] + L-glutamate. It catalyses the reaction C-terminal L-alpha-aminoacyl-L-glutamyl-L-glutamyl-[tubulin] + H2O = C-terminal L-alpha-aminoacyl-L-glutamyl-[tubulin] + L-glutamate. Metallocarboxypeptidase that mediates protein deglutamylation of tubulin and non-tubulin target proteins. Catalyzes the removal of polyglutamate side chains present on the gamma-carboxyl group of glutamate residues within the C-terminal tail of alpha- and beta-tubulin. Specifically cleaves tubulin long-side-chains, while it is not able to remove the branching point glutamate. Also catalyzes the removal of polyglutamate residues from the carboxy-terminus of alpha-tubulin as well as non-tubulin proteins. This is Cytosolic carboxypeptidase 1 (agtpbp1) from Danio rerio (Zebrafish).